Here is a 23-residue protein sequence, read N- to C-terminus: Cytochrome c oxidase subunit 7A1, mitochondrial (23 aa).

Belongs to the cytochrome c oxidase VIIa family. Component of the complex IV (CIV, cytochrome c oxidase), a multisubunit enzyme composed of 14 subunits. The complex is composed of a catalytic core of 3 subunits MT-CO1, MT-CO2 and MT-CO3, encoded in the mitochondrial DNA, and 11 supernumerary subunits COX4I1 (or COX4I2), COX5A, COX5B, COX6A2 (or COX6A1), COX6B1 (or COX6B2), COX6C, COX7A1 (or COX7A2), COX7B, COX7C, COX8B and NDUFA4, which are encoded in the nuclear genome. The complex exists as a monomer or a dimer and forms supercomplexes (SCs) in the inner mitochondrial membrane with NADH-ubiquinone oxidoreductase (complex I, CI) and ubiquinol-cytochrome c oxidoreductase (cytochrome b-c1 complex, complex III, CIII), resulting in different assemblies (supercomplex SCI(1)III(2)IV(1) and megacomplex MCI(2)III(2)IV(2)).

The protein resides in the mitochondrion inner membrane. Its pathway is energy metabolism; oxidative phosphorylation. Its function is as follows. Component of the mitochondrial respiratory complex IV (CIV, also named cytochrome c oxidase complex), the last enzyme in the mitochondrial electron transport chain which drives oxidative phosphorylation. The CIV complex is the component of the respiratory chain that catalyzes the reduction of oxygen to water. Acts as an assembly factor that specifically drives the homodimerization of CIV complexes, mediating the formation of mitochondrial respiratory supercomplexes (respirasomes) containing two CIV: supercomplxes with two molecules of CIV show improved activity. Despite being highly expressed in brown adipose tissue, not required for thermogenesis. The sequence is that of Cytochrome c oxidase subunit 7A1, mitochondrial (COX7A1) from Canis lupus familiaris (Dog).